The following is a 468-amino-acid chain: uncharacterized protein (468 aa).

Residues 447–468 (AVHVSNGDKPKVALPDTQLGSH) form a disordered region.

It belongs to the mycobacterial PPE family.

This is an uncharacterized protein from Mycobacterium tuberculosis (strain ATCC 25618 / H37Rv).